Reading from the N-terminus, the 343-residue chain is L-threonine 3-dehydrogenase (343 aa).

Residue cysteine 40 coordinates Zn(2+). Residues threonine 42 and histidine 45 each act as charge relay system in the active site. Zn(2+)-binding residues include histidine 65, glutamate 66, cysteine 95, cysteine 98, cysteine 101, and cysteine 109. NAD(+) is bound by residues isoleucine 177, aspartate 197, arginine 202, 264-266 (LGI), and 288-289 (IY).

The protein belongs to the zinc-containing alcohol dehydrogenase family. In terms of assembly, homotetramer. Zn(2+) serves as cofactor.

The protein localises to the cytoplasm. The enzyme catalyses L-threonine + NAD(+) = (2S)-2-amino-3-oxobutanoate + NADH + H(+). The protein operates within amino-acid degradation; L-threonine degradation via oxydo-reductase pathway; glycine from L-threonine: step 1/2. Its function is as follows. Catalyzes the NAD(+)-dependent oxidation of L-threonine to 2-amino-3-ketobutyrate. The chain is L-threonine 3-dehydrogenase from Vibrio atlanticus (strain LGP32) (Vibrio splendidus (strain Mel32)).